The following is a 65-amino-acid chain: Large ribosomal subunit protein bL35 (65 aa).

The protein belongs to the bacterial ribosomal protein bL35 family.

The chain is Large ribosomal subunit protein bL35 from Thermotoga maritima (strain ATCC 43589 / DSM 3109 / JCM 10099 / NBRC 100826 / MSB8).